Consider the following 248-residue polypeptide: Large ribosomal subunit protein uL1 (248 aa).

It belongs to the universal ribosomal protein uL1 family. Part of the 50S ribosomal subunit.

In terms of biological role, binds directly to 23S rRNA. The L1 stalk is quite mobile in the ribosome, and is involved in E site tRNA release. Its function is as follows. Protein L1 is also a translational repressor protein, it controls the translation of the L11 operon by binding to its mRNA. This Orientia tsutsugamushi (strain Boryong) (Rickettsia tsutsugamushi) protein is Large ribosomal subunit protein uL1.